We begin with the raw amino-acid sequence, 227 residues long: Nucleoside triphosphate pyrophosphatase (227 aa).

The Proton acceptor role is filled by D77.

It belongs to the Maf family. The cofactor is a divalent metal cation.

Its subcellular location is the cytoplasm. It catalyses the reaction a ribonucleoside 5'-triphosphate + H2O = a ribonucleoside 5'-phosphate + diphosphate + H(+). The catalysed reaction is a 2'-deoxyribonucleoside 5'-triphosphate + H2O = a 2'-deoxyribonucleoside 5'-phosphate + diphosphate + H(+). Nucleoside triphosphate pyrophosphatase. May have a dual role in cell division arrest and in preventing the incorporation of modified nucleotides into cellular nucleic acids. In Rickettsia typhi (strain ATCC VR-144 / Wilmington), this protein is Nucleoside triphosphate pyrophosphatase.